A 206-amino-acid chain; its full sequence is Histidine biosynthesis bifunctional protein HisIE (206 aa).

The tract at residues Met1–Phe117 is phosphoribosyl-AMP cyclohydrolase. Residues Leu118–Gln206 are phosphoribosyl-ATP pyrophosphohydrolase.

In the N-terminal section; belongs to the PRA-CH family. The protein in the C-terminal section; belongs to the PRA-PH family.

It is found in the cytoplasm. It catalyses the reaction 1-(5-phospho-beta-D-ribosyl)-ATP + H2O = 1-(5-phospho-beta-D-ribosyl)-5'-AMP + diphosphate + H(+). The catalysed reaction is 1-(5-phospho-beta-D-ribosyl)-5'-AMP + H2O = 1-(5-phospho-beta-D-ribosyl)-5-[(5-phospho-beta-D-ribosylamino)methylideneamino]imidazole-4-carboxamide. It functions in the pathway amino-acid biosynthesis; L-histidine biosynthesis; L-histidine from 5-phospho-alpha-D-ribose 1-diphosphate: step 2/9. The protein operates within amino-acid biosynthesis; L-histidine biosynthesis; L-histidine from 5-phospho-alpha-D-ribose 1-diphosphate: step 3/9. This is Histidine biosynthesis bifunctional protein HisIE from Xanthomonas axonopodis pv. citri (strain 306).